The primary structure comprises 366 residues: tRNA/tmRNA (uracil-C(5))-methyltransferase (366 aa).

The S-adenosyl-L-methionine site is built by glutamine 190, tyrosine 218, asparagine 223, glutamate 239, and aspartate 299. The active-site Nucleophile is the cysteine 324. The active-site Proton acceptor is the glutamate 358.

Belongs to the class I-like SAM-binding methyltransferase superfamily. RNA M5U methyltransferase family. TrmA subfamily.

The enzyme catalyses uridine(54) in tRNA + S-adenosyl-L-methionine = 5-methyluridine(54) in tRNA + S-adenosyl-L-homocysteine + H(+). The catalysed reaction is uridine(341) in tmRNA + S-adenosyl-L-methionine = 5-methyluridine(341) in tmRNA + S-adenosyl-L-homocysteine + H(+). In terms of biological role, dual-specificity methyltransferase that catalyzes the formation of 5-methyluridine at position 54 (m5U54) in all tRNAs, and that of position 341 (m5U341) in tmRNA (transfer-mRNA). This chain is tRNA/tmRNA (uracil-C(5))-methyltransferase, found in Cronobacter sakazakii (strain ATCC BAA-894) (Enterobacter sakazakii).